The following is a 365-amino-acid chain: Probable dual-specificity RNA methyltransferase RlmN (365 aa).

Glu99 (proton acceptor) is an active-site residue. In terms of domain architecture, Radical SAM core spans 105 to 344 (QSYGLSVCVT…CVVRQEHGTD (240 aa)). A disulfide bridge connects residues Cys112 and Cys349. [4Fe-4S] cluster contacts are provided by Cys119, Cys123, and Cys126. Residues 171-172 (GE), Ser203, 227-229 (SLH), and Asn305 contribute to the S-adenosyl-L-methionine site. The S-methylcysteine intermediate role is filled by Cys349.

It belongs to the radical SAM superfamily. RlmN family. Requires [4Fe-4S] cluster as cofactor.

The protein localises to the cytoplasm. The catalysed reaction is adenosine(2503) in 23S rRNA + 2 reduced [2Fe-2S]-[ferredoxin] + 2 S-adenosyl-L-methionine = 2-methyladenosine(2503) in 23S rRNA + 5'-deoxyadenosine + L-methionine + 2 oxidized [2Fe-2S]-[ferredoxin] + S-adenosyl-L-homocysteine. The enzyme catalyses adenosine(37) in tRNA + 2 reduced [2Fe-2S]-[ferredoxin] + 2 S-adenosyl-L-methionine = 2-methyladenosine(37) in tRNA + 5'-deoxyadenosine + L-methionine + 2 oxidized [2Fe-2S]-[ferredoxin] + S-adenosyl-L-homocysteine. Specifically methylates position 2 of adenine 2503 in 23S rRNA and position 2 of adenine 37 in tRNAs. The protein is Probable dual-specificity RNA methyltransferase RlmN of Lactococcus lactis subsp. cremoris (strain MG1363).